Here is a 320-residue protein sequence, read N- to C-terminus: Annexin A5 (320 aa).

Ala-2 carries the N-acetylalanine modification. Annexin repeat units lie at residues 15–86, 87–158, 170–242, and 246–317; these read FDER…ALMK, PSRL…VLLQ, AQVE…AVVK, and SIPA…LLCG. Lys-29 is covalently cross-linked (Glycyl lysine isopeptide (Lys-Gly) (interchain with G-Cter in SUMO1); alternate). Lys-29 participates in a covalent cross-link: Glycyl lysine isopeptide (Lys-Gly) (interchain with G-Cter in SUMO2); alternate. The residue at position 37 (Ser-37) is a Phosphoserine. Residues Lys-70, Lys-76, Lys-79, Lys-97, and Lys-101 each carry the N6-acetyllysine modification. N6-succinyllysine is present on Lys-290. Residues 314–320 carry the [IL]-x-C-x-x-[DE] motif motif; it reads LLCGGED.

The protein belongs to the annexin family. As to quaternary structure, monomer. Binds ATRX and EIF5B. In terms of processing, S-nitrosylation is induced by interferon-gamma and oxidatively-modified low-densitity lipoprotein (LDL(ox)) possibly implicating the iNOS-S100A8/9 transnitrosylase complex.

In terms of biological role, this protein is an anticoagulant protein that acts as an indirect inhibitor of the thromboplastin-specific complex, which is involved in the blood coagulation cascade. The protein is Annexin A5 (ANXA5) of Macaca fascicularis (Crab-eating macaque).